The chain runs to 328 residues: P2Y purinoceptor 6 (328 aa).

Topologically, residues 1 to 27 (MEWDNGTGQALGLPPTTCVYRENFKQL) are extracellular. Residue asparagine 5 is glycosylated (N-linked (GlcNAc...) asparagine). The chain crosses the membrane as a helical span at residues 28–48 (LLPPVYSAVLAAGLPLNICVI). Topologically, residues 49–62 (TQICTSRRALTRTA) are cytoplasmic. The helical transmembrane segment at 63 to 83 (VYTLNLALADLLYACSLPLLI) threads the bilayer. Topologically, residues 84 to 101 (YNYAQGDHWPFGDFACRL) are extracellular. Cysteine 99 and cysteine 177 are disulfide-bonded. The helical transmembrane segment at 102 to 122 (VRFLFYANLHGSILFLTCISF) threads the bilayer. Topologically, residues 123–144 (QRYLGICHPLAPWHKRGGRRAA) are cytoplasmic. The chain crosses the membrane as a helical span at residues 145 to 165 (WLVCVAVWLAVTTQCLPTAIF). Topologically, residues 166 to 194 (AATGIQRNRTVCYDLSPPALATHYMPYGM) are extracellular. Residues 195–215 (ALTVIGFLLPFAALLACYCLL) traverse the membrane as a helical segment. Over 216–236 (ACRLCRQDGPAEPVAQERRGK) the chain is Cytoplasmic. The chain crosses the membrane as a helical span at residues 237-257 (AARMAVVVAAAFAISFLPFHI). At 258–280 (TKTAYLAVRSTPGVPCTVLEAFA) the chain is on the extracellular side. A helical membrane pass occupies residues 281–303 (AAYKGTRPFASANSVLDPILFYF). Over 304–328 (TQKKFRRRPHELLQKLTAKWQRQGR) the chain is Cytoplasmic.

Belongs to the G-protein coupled receptor 1 family.

The protein localises to the cell membrane. In terms of biological role, receptor for extracellular UDP &gt; UTP &gt; ATP. The activity of this receptor is mediated by G proteins which activate a phosphatidylinositol-calcium second messenger system. The protein is P2Y purinoceptor 6 (P2RY6) of Homo sapiens (Human).